Reading from the N-terminus, the 697-residue chain is MARTIPLERVRNIGIAAHIDAGKTTTTERILFYSGVVHKMGEVHEGTAVTDWMAQERERGITITAAAISTSWLDHRINIIDTPGHVDFTIEVERSMRVLDGVIAVFCSVGGVQPQSETVWRQAERYQVPRIAFINKMDRTGADFFKVYGQIRDRLRANAVPIQVPVGRESDFHGLVDLVAMKTYLYTNDLGTDIQVSDEIPEEVQDLVAEYREKLLEAVAETDEALMEKYLEQLEGGEALTEEEIRHSLRQGTIKGLIVPVICGSSFKNRGVQRLLDAVVDYLPAPTEVPPIKGVLPDGEEGVRYADDDAPLSALAFKVMADPYGRLTFVRVYSGVLQKGSYIYNATKNKKERISRLIVLKSDERIEVEELRAGDLGAALGLKDTLTGDTICDEANSIILESLYIPEPVISVAVEPKTKQDMEKLSKALQSLSEEDPTFRVSIDSETNQTVIAGMGELHLEILVDRMLREFKVEANIGAPQVAYRETIRKSIRTEGKFIRQSGGKGQYGHVVIELEPGEPGSGFEFVSKIVGGSVPKEYINPAEQGMKEACESGVIAGYPLIDVKATLVDGSYHEVDSSEMAFKIAGSMAIKNGVTKASPVLLEPMMKVEVEVPEDFIGNVIGDLNSRRGQIEGQETDQSQSIAKVVAKVPLATMFGYATDIRSKTQGRGVFSMEFSHYEEVPRSVAETIIAKSKGN.

The tr-type G domain occupies 8–287 (ERVRNIGIAA…AVVDYLPAPT (280 aa)). Residues 17-24 (AHIDAGKT), 81-85 (DTPGH), and 135-138 (NKMD) each bind GTP.

This sequence belongs to the TRAFAC class translation factor GTPase superfamily. Classic translation factor GTPase family. EF-G/EF-2 subfamily.

Its subcellular location is the cytoplasm. Its function is as follows. Catalyzes the GTP-dependent ribosomal translocation step during translation elongation. During this step, the ribosome changes from the pre-translocational (PRE) to the post-translocational (POST) state as the newly formed A-site-bound peptidyl-tRNA and P-site-bound deacylated tRNA move to the P and E sites, respectively. Catalyzes the coordinated movement of the two tRNA molecules, the mRNA and conformational changes in the ribosome. This chain is Elongation factor G (fusA), found in Arthrospira platensis (Spirulina platensis).